A 605-amino-acid polypeptide reads, in one-letter code: Class II receptor tyrosine kinase (605 aa).

The Ig-like C2-type domain occupies 1 to 67; the sequence is MWSSPGRNLE…DGESASFRVD (67 aa). At 1-84 the chain is on the extracellular side; it reads MWSSPGRNLE…GSNSGVIAGV (84 aa). 3 N-linked (GlcNAc...) asparagine glycosylation sites follow: Asn-26, Asn-44, and Asn-72. The chain crosses the membrane as a helical span at residues 85-105; that stretch reads LITLLLLIALIIILICVFWVV. Topologically, residues 106-605 are cytoplasmic; that stretch reads WRYRRRGKFD…GRPRGVAGCV (500 aa). A disordered region spans residues 209–230; the sequence is EELSPIQEKPTRRNTGLSTYSQ. Residues 221-230 show a composition bias toward polar residues; sequence RNTGLSTYSQ. One can recognise a Protein kinase domain in the interval 346 to 605; the sequence is IREVKQIGVG…GRPRGVAGCV (260 aa). ATP contacts are provided by residues 352–360 and Lys-393; that span reads IGVGQFGAV. Asp-496 acts as the Proton acceptor in catalysis. Residue Tyr-527 is modified to Phosphotyrosine; by autocatalysis.

This sequence belongs to the protein kinase superfamily. Tyr protein kinase family. Insulin receptor subfamily. Post-translationally, phosphorylated.

It is found in the cell membrane. The catalysed reaction is L-tyrosyl-[protein] + ATP = O-phospho-L-tyrosyl-[protein] + ADP + H(+). This is Class II receptor tyrosine kinase (TK) from Geodia cydonium (Sponge).